A 98-amino-acid chain; its full sequence is NADH-ubiquinone oxidoreductase chain 4L (98 aa).

3 consecutive transmembrane segments (helical) span residues 1–21 (MPLI…GMLV), 29–49 (SLLC…LMTL), and 58–78 (IMPI…LALL).

Belongs to the complex I subunit 4L family. As to quaternary structure, core subunit of respiratory chain NADH dehydrogenase (Complex I) which is composed of 45 different subunits.

It localises to the mitochondrion inner membrane. The enzyme catalyses a ubiquinone + NADH + 5 H(+)(in) = a ubiquinol + NAD(+) + 4 H(+)(out). Core subunit of the mitochondrial membrane respiratory chain NADH dehydrogenase (Complex I) which catalyzes electron transfer from NADH through the respiratory chain, using ubiquinone as an electron acceptor. Part of the enzyme membrane arm which is embedded in the lipid bilayer and involved in proton translocation. This is NADH-ubiquinone oxidoreductase chain 4L (MT-ND4L) from Pongo abelii (Sumatran orangutan).